We begin with the raw amino-acid sequence, 829 residues long: Translation initiation factor IF-2 (829 aa).

Basic and acidic residues predominate over residues 128–137 (QNAEEEKVEA). The segment at 128 to 157 (QNAEEEKVEASAKTVQNNEDIQPQTSKKKE) is disordered. Over residues 140 to 152 (KTVQNNEDIQPQT) the composition is skewed to polar residues. A tr-type G domain is found at 327–497 (TRAPVVTVMG…LLIAEMQDLK (171 aa)). The tract at residues 336-343 (GHVDHGKT) is G1. 336 to 343 (GHVDHGKT) is a GTP binding site. Positions 361–365 (GITQH) are G2. Residues 383 to 386 (DTPG) form a G3 region. GTP-binding positions include 383-387 (DTPGH) and 437-440 (NKID). The interval 437–440 (NKID) is G4. Positions 473 to 475 (SAL) are G5.

This sequence belongs to the TRAFAC class translation factor GTPase superfamily. Classic translation factor GTPase family. IF-2 subfamily.

It is found in the cytoplasm. Its function is as follows. One of the essential components for the initiation of protein synthesis. Protects formylmethionyl-tRNA from spontaneous hydrolysis and promotes its binding to the 30S ribosomal subunits. Also involved in the hydrolysis of GTP during the formation of the 70S ribosomal complex. In Rickettsia felis (strain ATCC VR-1525 / URRWXCal2) (Rickettsia azadi), this protein is Translation initiation factor IF-2.